The chain runs to 961 residues: Glycine dehydrogenase (decarboxylating) (961 aa).

Lys-709 bears the N6-(pyridoxal phosphate)lysine mark.

The protein belongs to the GcvP family. As to quaternary structure, the glycine cleavage system is composed of four proteins: P, T, L and H. Requires pyridoxal 5'-phosphate as cofactor.

It carries out the reaction N(6)-[(R)-lipoyl]-L-lysyl-[glycine-cleavage complex H protein] + glycine + H(+) = N(6)-[(R)-S(8)-aminomethyldihydrolipoyl]-L-lysyl-[glycine-cleavage complex H protein] + CO2. Functionally, the glycine cleavage system catalyzes the degradation of glycine. The P protein binds the alpha-amino group of glycine through its pyridoxal phosphate cofactor; CO(2) is released and the remaining methylamine moiety is then transferred to the lipoamide cofactor of the H protein. This Streptomyces griseus subsp. griseus (strain JCM 4626 / CBS 651.72 / NBRC 13350 / KCC S-0626 / ISP 5235) protein is Glycine dehydrogenase (decarboxylating).